The primary structure comprises 121 residues: Mitochondrial intermembrane space cysteine motif-containing protein MIX14 (121 aa).

CHCH domains are found at residues 14–56 and 60–105; these read VANC…VPSV and MSEC…VKNK. 4 short sequence motifs (cx9C motif) span residues 17-27, 38-48, 63-73, and 87-97; these read CPQEFLQYHKC, CKDGRMILSTC, CSEPMKKYDQC, and CLGFLQDLRKC. 4 cysteine pairs are disulfide-bonded: cysteine 17–cysteine 48, cysteine 27–cysteine 38, cysteine 63–cysteine 97, and cysteine 73–cysteine 87.

It localises to the mitochondrion intermembrane space. The chain is Mitochondrial intermembrane space cysteine motif-containing protein MIX14 (MIX14) from Saccharomyces cerevisiae (strain ATCC 204508 / S288c) (Baker's yeast).